A 546-amino-acid polypeptide reads, in one-letter code: MPDRTGPLLRTPAWRALEAHLAELQPLHLRELFARDPGRGERLVADGAGLHLDYSKQRVTEETVRLLVALAEARGLPERRAAMFRGEKVNVTEGRAVLHVALRAPRGERILVDGNDVVPEVHAVLDRMAAFADQVRSGAWTGFTGKRIRTVVNVGIGGSDLGPAMAYRALRAYAIRDLAFRFVSNVDGTDLAEAVRDLDPAETLFLVASKTFTTLETMTNAASARSWLLAALGDPRAVARHFVAISTNEAEVRRFGIDPANMFGFWDWVGGRYSMDSAIGLSTMIAVGPEGFRELLAGFREMDEHFRDAPLERNLPALIGLIGVWNANLLGAGTVAVLPYDQYLDRFPAYLQQLTMESNGKRVTASGTPVEGHGTGAIYWGEPGTNGQHSFYQLLHQGTHLVACDFIGFCQPLHALGRHHDLLMANLFAQGEALAFGKTAEEARAEGTPEPLVPHRTFPGNRPSSTILSDRLTPRTLGALVALYEHAVFTQGVIWDVDSFDQWGVELGKVLANRIVKELESPAEPALAHDGSTNALIRRYRARRGG.

The active-site Proton donor is glutamate 357. Catalysis depends on residues histidine 389 and lysine 509.

This sequence belongs to the GPI family.

The protein resides in the cytoplasm. It catalyses the reaction alpha-D-glucose 6-phosphate = beta-D-fructose 6-phosphate. The protein operates within carbohydrate biosynthesis; gluconeogenesis. Its pathway is carbohydrate degradation; glycolysis; D-glyceraldehyde 3-phosphate and glycerone phosphate from D-glucose: step 2/4. In terms of biological role, catalyzes the reversible isomerization of glucose-6-phosphate to fructose-6-phosphate. The protein is Glucose-6-phosphate isomerase of Anaeromyxobacter dehalogenans (strain 2CP-1 / ATCC BAA-258).